A 740-amino-acid polypeptide reads, in one-letter code: Rho GTPase-activating protein 92B (740 aa).

The BAR domain occupies glutamate 13–lysine 246. Positions leucine 49–serine 74 are disordered. A Rho-GAP domain is found at threonine 251–phenylalanine 448. The tract at residues glycine 467 to aspartate 740 is disordered. 2 positions are modified to phosphoserine: serine 469 and serine 473. A compositionally biased stretch (polar residues) spans threonine 506–serine 520. A compositionally biased stretch (pro residues) spans proline 566–proline 577. Position 593 is a phosphoserine (serine 593). Residue threonine 595 is modified to Phosphothreonine. The segment covering threonine 643 to glycine 655 has biased composition (polar residues). Basic and acidic residues predominate over residues phenylalanine 659–asparagine 672. A compositionally biased stretch (polar residues) spans glycine 673 to lysine 686. A compositionally biased stretch (low complexity) spans proline 694–proline 713. Position 715 is a phosphoserine (serine 715). The residue at position 721 (threonine 721) is a Phosphothreonine. Over residues proline 725–threonine 734 the composition is skewed to pro residues. A phosphoserine mark is found at serine 738 and serine 739.

In terms of biological role, GTPase activator for the Rho-type GTPases by converting them to an inactive GDP-bound state. This chain is Rho GTPase-activating protein 92B (RhoGAP92B), found in Drosophila melanogaster (Fruit fly).